A 229-amino-acid polypeptide reads, in one-letter code: Large ribosomal subunit protein uL1 (229 aa).

Belongs to the universal ribosomal protein uL1 family. In terms of assembly, part of the 50S ribosomal subunit.

In terms of biological role, binds directly to 23S rRNA. The L1 stalk is quite mobile in the ribosome, and is involved in E site tRNA release. Functionally, protein L1 is also a translational repressor protein, it controls the translation of the L11 operon by binding to its mRNA. The protein is Large ribosomal subunit protein uL1 of Lactococcus lactis subsp. cremoris (strain MG1363).